A 311-amino-acid polypeptide reads, in one-letter code: Malate dehydrogenase (311 aa).

Residues 7–13 and Asp34 each bind NAD(+); that span reads GAAGGIG. Substrate-binding residues include Arg81 and Arg87. NAD(+) contacts are provided by residues Asn94 and 117–119; that span reads ITN. Substrate contacts are provided by Asn119 and Arg153. Catalysis depends on His177, which acts as the Proton acceptor. An NAD(+)-binding site is contributed by Met227.

The protein belongs to the LDH/MDH superfamily. MDH type 1 family. In terms of assembly, homodimer.

It carries out the reaction (S)-malate + NAD(+) = oxaloacetate + NADH + H(+). Catalyzes the reversible oxidation of malate to oxaloacetate. The chain is Malate dehydrogenase (mdh) from Vibrio cholerae serotype O1 (strain ATCC 39315 / El Tor Inaba N16961).